We begin with the raw amino-acid sequence, 173 residues long: RxLR effector protein PITG_10232 (173 aa).

The N-terminal stretch at M1 to A24 is a signal peptide. The interval S25–D64 is disordered. Residues R37–R49 are compositionally biased toward basic and acidic residues. The short motif at R46–R65 is the RxLR-dEER element.

It belongs to the RxLR effector family.

Its subcellular location is the secreted. It is found in the host nucleus. The protein localises to the host cytoplasm. Effector that leads to host programmed cell death. The polypeptide is RxLR effector protein PITG_10232 (Phytophthora infestans (strain T30-4) (Potato late blight agent)).